Here is a 384-residue protein sequence, read N- to C-terminus: Succinyl-diaminopimelate desuccinylase (384 aa).

A Zn(2+)-binding site is contributed by His73. The active site involves Asp75. Asp106 contributes to the Zn(2+) binding site. The Proton acceptor role is filled by Glu140. Glu141, Glu169, and His358 together coordinate Zn(2+).

The protein belongs to the peptidase M20A family. DapE subfamily. In terms of assembly, homodimer. Zn(2+) is required as a cofactor. Requires Co(2+) as cofactor.

It carries out the reaction N-succinyl-(2S,6S)-2,6-diaminopimelate + H2O = (2S,6S)-2,6-diaminopimelate + succinate. Its pathway is amino-acid biosynthesis; L-lysine biosynthesis via DAP pathway; LL-2,6-diaminopimelate from (S)-tetrahydrodipicolinate (succinylase route): step 3/3. In terms of biological role, catalyzes the hydrolysis of N-succinyl-L,L-diaminopimelic acid (SDAP), forming succinate and LL-2,6-diaminopimelate (DAP), an intermediate involved in the bacterial biosynthesis of lysine and meso-diaminopimelic acid, an essential component of bacterial cell walls. This chain is Succinyl-diaminopimelate desuccinylase, found in Pelagibacter ubique (strain HTCC1062).